Here is an 88-residue protein sequence, read N- to C-terminus: Adenylosuccinate lyase (88 aa).

Residues 4–5 and 67–69 each bind N(6)-(1,2-dicarboxyethyl)-AMP; these read RY and KHD.

It belongs to the lyase 1 family. Adenylosuccinate lyase subfamily. As to quaternary structure, homotetramer and homodimer. Residues from neighboring subunits contribute catalytic and substrate-binding residues to each active site.

The enzyme catalyses N(6)-(1,2-dicarboxyethyl)-AMP = fumarate + AMP. It catalyses the reaction (2S)-2-[5-amino-1-(5-phospho-beta-D-ribosyl)imidazole-4-carboxamido]succinate = 5-amino-1-(5-phospho-beta-D-ribosyl)imidazole-4-carboxamide + fumarate. It functions in the pathway purine metabolism; AMP biosynthesis via de novo pathway; AMP from IMP: step 2/2. Its pathway is purine metabolism; IMP biosynthesis via de novo pathway; 5-amino-1-(5-phospho-D-ribosyl)imidazole-4-carboxamide from 5-amino-1-(5-phospho-D-ribosyl)imidazole-4-carboxylate: step 2/2. In terms of biological role, catalyzes two reactions in de novo purine nucleotide biosynthesis. Catalyzes the breakdown of 5-aminoimidazole- (N-succinylocarboxamide) ribotide (SAICAR or 2-[5-amino-1-(5-phospho-beta-D-ribosyl)imidazole-4-carboxamido]succinate) to 5-aminoimidazole-4-carboxamide ribotide (AICAR or 5-amino-1-(5-phospho-beta-D-ribosyl)imidazole-4-carboxamide) and fumarate, and of adenylosuccinate (ADS or N(6)-(1,2-dicarboxyethyl)-AMP) to adenosine monophosphate (AMP) and fumarate. This is Adenylosuccinate lyase (purB) from Spiroplasma citri.